Consider the following 190-residue polypeptide: Recombination protein RecR (190 aa).

Residues cysteine 58–cysteine 73 form a C4-type zinc finger. Positions asparagine 81–proline 167 constitute a Toprim domain.

This sequence belongs to the RecR family.

May play a role in DNA repair. It seems to be involved in an RecBC-independent recombinational process of DNA repair. It may act with RecF and RecO. The chain is Recombination protein RecR from Campylobacter jejuni subsp. doylei (strain ATCC BAA-1458 / RM4099 / 269.97).